Consider the following 391-residue polypeptide: MGASERSVFRVLIRALTERMFKHLRRWFITHIFGRSRQRARLVSKEGRCNIEFGNVDAQSRFIFFVDIWTTVLDLKWRYKMTVFITAFLGSWFLFGLLWYVVAYVHKDLPEFYPPDNRTPCVENINGMTSAFLFSLETQVTIGYGFRFVTEQCATAIFLLIFQSILGVIINSFMCGAILAKISRPKKRAKTITFSKNAVISKRGGKLCLLIRVANLRKSLLIGSHIYGKLLKTTITPEGETIILDQTNINFVVDAGNENLFFISPLTIYHIIDHNSPFFHMAAETLSQQDFELVVFLDGTVESTSATCQVRTSYVPEEVLWGYRFVPIVSKTKEGKYRVDFHNFGKTVEVETPHCAMCLYNEKDARARMKRGYDNPNFVLSEVDETDDTQM.

The Cytoplasmic segment spans residues methionine 1–tryptophan 77. Serine 44 is subject to Phosphoserine; by SGK1. The helical transmembrane segment at arginine 78–valine 102 threads the bilayer. Residues alanine 103 to glycine 127 lie on the Extracellular side of the membrane. The N-linked (GlcNAc...) asparagine glycan is linked to asparagine 117. The segment at residues methionine 128 to glutamine 139 is an intramembrane region (helical; Pore-forming). Residues valine 140 to phenylalanine 146 constitute an intramembrane region (pore-forming). A Selectivity filter motif is present at residues threonine 141–phenylalanine 146. At arginine 147–threonine 155 the chain is on the extracellular side. A helical transmembrane segment spans residues alanine 156 to alanine 177. Topologically, residues isoleucine 178–methionine 391 are cytoplasmic. Positions alanine 180–leucine 207 are polyphosphoinositide (PIP2)-binding. ATP is bound at residue glycine 223–leucine 230.

This sequence belongs to the inward rectifier-type potassium channel (TC 1.A.2.1) family. KCNJ1 subfamily. Interacts with SGK1 and SLC9A3R2/NHERF2. In terms of processing, phosphorylation at Ser-44 by SGK1 is necessary for its expression at the cell membrane. Mainly in kidney (renal cortex, medulla and papilla). As to expression, kidney.

Its subcellular location is the cell membrane. The enzyme catalyses K(+)(in) = K(+)(out). With respect to regulation, inhibited by WNK3. Activated by phosphatidylinositol 4,5 biphosphate (PtdIns(4,5)P2). Its function is as follows. Inward rectifier potassium channels are characterized by a greater tendency to allow potassium to flow into the cell rather than out of it. Their voltage dependence is regulated by the concentration of extracellular potassium; as external potassium is raised, the voltage range of the channel opening shifts to more positive voltages. The inward rectification is mainly due to the blockage of outward current by internal magnesium. This channel is activated by internal ATP and can be blocked by external barium. In the kidney, probably plays a major role in potassium homeostasis. In terms of biological role, inward rectifier potassium channels are characterized by a greater tendency to allow potassium to flow into the cell rather than out of it. Their voltage dependence is regulated by the concentration of extracellular potassium; as external potassium is raised, the voltage range of the channel opening shifts to more positive voltages. This Rattus norvegicus (Rat) protein is ATP-sensitive inward rectifier potassium channel 1 (Kcnj1).